Reading from the N-terminus, the 341-residue chain is L-threonine 3-dehydrogenase (341 aa).

C38 contributes to the Zn(2+) binding site. Active-site charge relay system residues include T40 and H43. Residues H63, E64, C93, C96, C99, and C107 each coordinate Zn(2+). NAD(+)-binding positions include I175, D195, R200, 262–264, and 286–287; these read LGI and IY.

It belongs to the zinc-containing alcohol dehydrogenase family. In terms of assembly, homotetramer. Zn(2+) is required as a cofactor.

Its subcellular location is the cytoplasm. It catalyses the reaction L-threonine + NAD(+) = (2S)-2-amino-3-oxobutanoate + NADH + H(+). It functions in the pathway amino-acid degradation; L-threonine degradation via oxydo-reductase pathway; glycine from L-threonine: step 1/2. Catalyzes the NAD(+)-dependent oxidation of L-threonine to 2-amino-3-ketobutyrate. The protein is L-threonine 3-dehydrogenase of Shewanella baltica (strain OS223).